A 138-amino-acid chain; its full sequence is Ribosome maturation factor RimP (138 aa).

The protein belongs to the RimP family.

It is found in the cytoplasm. Required for maturation of 30S ribosomal subunits. This Campylobacter concisus (strain 13826) protein is Ribosome maturation factor RimP.